We begin with the raw amino-acid sequence, 93 residues long: Large ribosomal subunit protein eL42 (93 aa).

The Zn(2+) site is built by C11, C14, C72, and C75. A C4-type zinc finger spans residues 11 to 75; the sequence is CPHCHSHFEH…TDLKYRCSEC (65 aa).

Belongs to the eukaryotic ribosomal protein eL42 family. In terms of assembly, part of the 50S ribosomal subunit. Zn(2+) is required as a cofactor.

Its function is as follows. Binds to the 23S rRNA. This is Large ribosomal subunit protein eL42 (rpl44e) from Natronomonas pharaonis (strain ATCC 35678 / DSM 2160 / CIP 103997 / JCM 8858 / NBRC 14720 / NCIMB 2260 / Gabara) (Halobacterium pharaonis).